The chain runs to 109 residues: Large ribosomal subunit protein uL22 (109 aa).

It belongs to the universal ribosomal protein uL22 family. In terms of assembly, part of the 50S ribosomal subunit.

In terms of biological role, this protein binds specifically to 23S rRNA; its binding is stimulated by other ribosomal proteins, e.g. L4, L17, and L20. It is important during the early stages of 50S assembly. It makes multiple contacts with different domains of the 23S rRNA in the assembled 50S subunit and ribosome. Its function is as follows. The globular domain of the protein is located near the polypeptide exit tunnel on the outside of the subunit, while an extended beta-hairpin is found that lines the wall of the exit tunnel in the center of the 70S ribosome. The protein is Large ribosomal subunit protein uL22 of Cupriavidus necator (strain ATCC 17699 / DSM 428 / KCTC 22496 / NCIMB 10442 / H16 / Stanier 337) (Ralstonia eutropha).